Here is a 143-residue protein sequence, read N- to C-terminus: Large ribosomal subunit protein uL13 (143 aa).

It belongs to the universal ribosomal protein uL13 family. Part of the 50S ribosomal subunit.

This protein is one of the early assembly proteins of the 50S ribosomal subunit, although it is not seen to bind rRNA by itself. It is important during the early stages of 50S assembly. The polypeptide is Large ribosomal subunit protein uL13 (Methylacidiphilum infernorum (isolate V4) (Methylokorus infernorum (strain V4))).